Reading from the N-terminus, the 428-residue chain is Kynureninase (428 aa).

Pyridoxal 5'-phosphate is bound by residues Thr-104, Thr-105, Phe-132 to Asp-135, Asp-213, His-216, and Tyr-238. Lys-239 carries the N6-(pyridoxal phosphate)lysine modification. The pyridoxal 5'-phosphate site is built by Trp-267 and Thr-295.

The protein belongs to the kynureninase family. Homodimer. It depends on pyridoxal 5'-phosphate as a cofactor.

It carries out the reaction L-kynurenine + H2O = anthranilate + L-alanine + H(+). It catalyses the reaction 3-hydroxy-L-kynurenine + H2O = 3-hydroxyanthranilate + L-alanine + H(+). The protein operates within amino-acid degradation; L-kynurenine degradation; L-alanine and anthranilate from L-kynurenine: step 1/1. It participates in cofactor biosynthesis; NAD(+) biosynthesis; quinolinate from L-kynurenine: step 2/3. Catalyzes the cleavage of L-kynurenine (L-Kyn) and L-3-hydroxykynurenine (L-3OHKyn) into anthranilic acid (AA) and 3-hydroxyanthranilic acid (3-OHAA), respectively. The sequence is that of Kynureninase from Geobacillus thermodenitrificans (strain NG80-2).